The primary structure comprises 186 residues: Photosystem I assembly protein Ycf4 (186 aa).

Helical transmembrane passes span 26–46 (WATI…SSYF) and 66–86 (IVMT…WLTI).

The protein belongs to the Ycf4 family.

The protein localises to the plastid. The protein resides in the chloroplast thylakoid membrane. Functionally, seems to be required for the assembly of the photosystem I complex. This chain is Photosystem I assembly protein Ycf4, found in Pyropia yezoensis (Susabi-nori).